The chain runs to 361 residues: Homer protein homolog 3 (361 aa).

A required for interaction with NFATC2 region spans residues Met1–Trp80. The WH1 domain occupies Met1–Ala113. The segment at Arg114–Glu169 is disordered. Residues Ser120 and Ser159 each carry the phosphoserine modification. Coiled-coil stretches lie at residues Ala191 to Thr243 and Gly254 to Glu358.

This sequence belongs to the Homer family. As to quaternary structure, tetramer. Isoform 1 and isoform 2 encode coiled-coil structures that mediate homo- and heteromultimerization. Interacts with NFATC2; interaction is calcium independent; interaction competes with PPP3CA for NFATC2 binding; interaction is reduced by AKT activation. Interacts with NFATC1 and NFATC4. Interacts with SHANK1; forms a high-order complex at least composed of SHANK1 and HOMER3; the complex formation is regulated by CAMK2A-mediated phosphorylation.

Its subcellular location is the cytoplasm. The protein resides in the postsynaptic density. It localises to the synapse. In terms of biological role, postsynaptic density scaffolding protein. Binds and cross-links cytoplasmic regions of GRM1, GRM5, ITPR1, DNM3, RYR1, RYR2, SHANK1 and SHANK3. By physically linking GRM1 and GRM5 with ER-associated ITPR1 receptors, it aids the coupling of surface receptors to intracellular calcium release. Isoforms can be differently regulated and may play an important role in maintaining the plasticity at glutamatergic synapses. Negatively regulates T cell activation by inhibiting the calcineurin-NFAT pathway. Acts by competing with calcineurin/PPP3CA for NFAT protein binding, hence preventing NFAT activation by PPP3CA. In Homo sapiens (Human), this protein is Homer protein homolog 3.